We begin with the raw amino-acid sequence, 363 residues long: Proline/serine-rich coiled-coil protein 1 (363 aa).

S22 carries the post-translational modification Phosphoserine. The stretch at P38–P41 is repeat 1. Positions E39 to G67 are disordered. L42 is subject to Phosphoserine. G45 is modified (phosphothreonine). Residues S47, S65, S70, S98, S122, and S140 each carry the phosphoserine modification. The stretch at P68–P71 is repeat 2. Residues S70–Q94 adopt a coiled-coil conformation. The disordered stretch occupies residues D95–R363. A 4 X 4 AA repeats of P-X-X-P region spans residues L103–P246. Positions P112–V124 are enriched in basic and acidic residues. Over residues S133 to L148 the composition is skewed to low complexity. Phosphothreonine is present on T145. Phosphoserine occurs at positions 186 and 190. Residues S186–T196 show a composition bias toward polar residues. Positions P197 to A210 are enriched in low complexity. Position 212 is a phosphoserine (S212). Position 215 is a phosphothreonine (T215). A run of 2 repeats spans residues P238–P241 and P243–P246.

Belongs to the PSRC1 family. Interacts with APC2. Interacts with KIF2A. Interacts with ANKRD53; recruits ANKRD53 to the spindle during mitosis. In terms of processing, phosphorylated during mitosis. Widely expressed in adult and fetal tissues, with highest expression in the adult brain and fetal thymus. Not detected in adult skeletal muscle.

The protein resides in the cytoplasm. Its subcellular location is the cytoskeleton. The protein localises to the spindle. It localises to the spindle pole. Required for normal progression through mitosis. Required for normal congress of chromosomes at the metaphase plate, and for normal rate of chromosomal segregation during anaphase. Plays a role in the regulation of mitotic spindle dynamics. Increases the rate of turnover of microtubules on metaphase spindles, and contributes to the generation of normal tension across sister kinetochores. Recruits KIF2A and ANKRD53 to the mitotic spindle and spindle poles. May participate in p53/TP53-regulated growth suppression. This is Proline/serine-rich coiled-coil protein 1 (PSRC1) from Homo sapiens (Human).